A 134-amino-acid polypeptide reads, in one-letter code: MAKEFGRADRVAQQIQREIAVILQREVKDPRVGMVTVSDVELTRDLQHAKIFVTFFLNEVDDIEAGVKVLNDASGYIRILMGKAMKLRVVPEIRFVYDKTLVEGMRISNLVTNTVRDDQLRRGESPDQNEEDRD.

Belongs to the RbfA family. Monomer. Binds 30S ribosomal subunits, but not 50S ribosomal subunits or 70S ribosomes.

It is found in the cytoplasm. Its function is as follows. One of several proteins that assist in the late maturation steps of the functional core of the 30S ribosomal subunit. Associates with free 30S ribosomal subunits (but not with 30S subunits that are part of 70S ribosomes or polysomes). Required for efficient processing of 16S rRNA. May interact with the 5'-terminal helix region of 16S rRNA. This Tolumonas auensis (strain DSM 9187 / NBRC 110442 / TA 4) protein is Ribosome-binding factor A.